Here is a 225-residue protein sequence, read N- to C-terminus: 7-cyano-7-deazaguanine synthase (225 aa).

Position 10 to 20 (10 to 20 (FSGGQDSTTLA)) interacts with ATP. Residues C190, C205, C208, and C211 each coordinate Zn(2+).

This sequence belongs to the QueC family. It depends on Zn(2+) as a cofactor.

It carries out the reaction 7-carboxy-7-deazaguanine + NH4(+) + ATP = 7-cyano-7-deazaguanine + ADP + phosphate + H2O + H(+). It functions in the pathway purine metabolism; 7-cyano-7-deazaguanine biosynthesis. Functionally, catalyzes the ATP-dependent conversion of 7-carboxy-7-deazaguanine (CDG) to 7-cyano-7-deazaguanine (preQ(0)). This chain is 7-cyano-7-deazaguanine synthase, found in Helicobacter pylori (strain J99 / ATCC 700824) (Campylobacter pylori J99).